The chain runs to 553 residues: Putative transport protein YidE (553 aa).

The next 5 membrane-spanning stretches (helical) occupy residues 4–24 (IALT…IGNV), 28–48 (GIGL…HFVS), 65–85 (FGLI…FFAS), 95–115 (LFAV…HKLF), and 158–178 (MSYA…MWML). RCK C-terminal domains follow at residues 191-276 (QQHE…VIGQ) and 279-361 (DTSL…VLGN). 6 helical membrane passes run 371–391 (MLPV…PVFV), 393–413 (GFPA…ALIL), 431–448 (NLAL…VVGL), 464–484 (LSWI…VGIL), 493–513 (YLTM…LAFA), and 533–553 (LVMF…WSIG).

This sequence belongs to the AAE transporter (TC 2.A.81) family. YidE subfamily.

Its subcellular location is the cell membrane. This is Putative transport protein YidE from Shigella sonnei (strain Ss046).